The following is a 437-amino-acid chain: Protein farnesyltransferase subunit beta (437 aa).

PFTB repeat units follow at residues 123-164 (ATDV…CIIG), 174-215 (REKL…SLTN), 222-263 (FEGT…VILK), 270-312 (LKSL…PLLH), and 332-374 (QQAL…SIAQ). Residues 248-251 (HGGY) and 291-294 (RCNK) each bind (2E,6E)-farnesyl diphosphate. Zn(2+) contacts are provided by Asp-297 and Cys-299. Residue 300–303 (YSFW) coordinates (2E,6E)-farnesyl diphosphate. Residue His-362 coordinates Zn(2+). Ser-432 is modified (phosphoserine). Phosphothreonine is present on Thr-436.

The protein belongs to the protein prenyltransferase subunit beta family. As to quaternary structure, heterodimer of FNTA and FNTB. Zn(2+) serves as cofactor.

The enzyme catalyses L-cysteinyl-[protein] + (2E,6E)-farnesyl diphosphate = S-(2E,6E)-farnesyl-L-cysteinyl-[protein] + diphosphate. In terms of biological role, essential subunit of the farnesyltransferase complex. Catalyzes the transfer of a farnesyl moiety from farnesyl diphosphate to a cysteine at the fourth position from the C-terminus of several proteins having the C-terminal sequence Cys-aliphatic-aliphatic-X. This is Protein farnesyltransferase subunit beta (Fntb) from Mus musculus (Mouse).